The chain runs to 41 residues: Large ribosomal subunit protein bL36 (41 aa).

It belongs to the bacterial ribosomal protein bL36 family.

The sequence is that of Large ribosomal subunit protein bL36 from Granulibacter bethesdensis (strain ATCC BAA-1260 / CGDNIH1).